Here is a 596-residue protein sequence, read N- to C-terminus: Actin-histidine N-methyltransferase (596 aa).

Residues Arg75, 104 to 106 (EGY), Arg254, 275 to 279 (DMCNH), and 325 to 327 (NGF) contribute to the S-adenosyl-L-methionine site. The SET domain occupies 94–314 (DGFEISNFAD…EGEQIYIFYG (221 aa)). Residues 556–596 (QCKDLNGTQEDPPGGGAVVKEIEKHDPSAKRTEGEPKDAGK) are disordered. Residues 575-596 (KEIEKHDPSAKRTEGEPKDAGK) show a composition bias toward basic and acidic residues.

Belongs to the class V-like SAM-binding methyltransferase superfamily. SETD3 actin-histidine methyltransferase family.

It localises to the cytoplasm. The catalysed reaction is L-histidyl-[protein] + S-adenosyl-L-methionine = N(tele)-methyl-L-histidyl-[protein] + S-adenosyl-L-homocysteine + H(+). In terms of biological role, protein-histidine N-methyltransferase that specifically mediates 3-methylhistidine (tele-methylhistidine) methylation of actin at 'His-73'. Does not have protein-lysine N-methyltransferase activity and probably only catalyzes histidine methylation of actin. This is Actin-histidine N-methyltransferase from Danio rerio (Zebrafish).